Here is a 509-residue protein sequence, read N- to C-terminus: Carboxysome shell carbonic anhydrase (509 aa).

Zn(2+) is bound at residue Cys170. The Proton acceptor role is filled by Asp172. Zn(2+) is bound by residues His238 and Cys249.

It belongs to the beta-class carbonic anhydrase family. CsoSCA subfamily. As to quaternary structure, homodimer. It depends on Zn(2+) as a cofactor.

It localises to the carboxysome. The enzyme catalyses hydrogencarbonate + H(+) = CO2 + H2O. In terms of biological role, reversible hydration of carbon dioxide. Essential for photosynthetic carbon dioxide fixation, supplies CO(2) to RuBisCO (ribulose bisphosphate carboxylase, cbbL-cbbS) in the carboxysome. There are estimated to be 29 CsoSCA oligomers per carboxysome. This chain is Carboxysome shell carbonic anhydrase, found in Prochlorococcus marinus subsp. pastoris (strain CCMP1986 / NIES-2087 / MED4).